Here is a 361-residue protein sequence, read N- to C-terminus: Histidinol-phosphate aminotransferase (361 aa).

N6-(pyridoxal phosphate)lysine is present on lysine 219.

This sequence belongs to the class-II pyridoxal-phosphate-dependent aminotransferase family. Histidinol-phosphate aminotransferase subfamily. In terms of assembly, homodimer. Pyridoxal 5'-phosphate serves as cofactor.

The enzyme catalyses L-histidinol phosphate + 2-oxoglutarate = 3-(imidazol-4-yl)-2-oxopropyl phosphate + L-glutamate. It participates in amino-acid biosynthesis; L-histidine biosynthesis; L-histidine from 5-phospho-alpha-D-ribose 1-diphosphate: step 7/9. The sequence is that of Histidinol-phosphate aminotransferase from Acinetobacter baylyi (strain ATCC 33305 / BD413 / ADP1).